Here is a 2269-residue protein sequence, read N- to C-terminus: Neuron navigator 3 (2269 aa).

The 108-residue stretch at 55–162 (SKICKIYTDW…LFFILSRYKQ (108 aa)) folds into the Calponin-homology (CH) domain. Over residues 186–207 (TGAAQLSQHKTQDMQSSLTARY) the composition is skewed to polar residues. Disordered stretches follow at residues 186-358 (TGAA…RSML) and 388-532 (SEFG…NKGS). Residues 236 to 252 (GSGSNSSKGSSNLNRRS) show a composition bias toward low complexity. Composition is skewed to polar residues over residues 267-291 (ASGN…QQLA) and 305-319 (SKSM…SSML). Residues 323-333 (PPSPTSSPTPP) show a composition bias toward pro residues. The span at 346–356 (ASKSAPGNQRS) shows a compositional bias: polar residues. Residues 411 to 432 (PSASAFAPPSKSNNCKNHNNKS) are compositionally biased toward low complexity. Polar residues predominate over residues 505 to 518 (TATSKPAGTQSCVP). Residues 644–672 (ETRRMRTVKNIADLRQNLEETMSSLRGTQ) adopt a coiled-coil conformation. Disordered stretches follow at residues 692 to 737 (GRGL…STTV), 756 to 776 (ASGA…VGPE), 836 to 1036 (VKEM…IPGP), 1050 to 1079 (SGSA…TSLD), 1097 to 1412 (VPLQ…GTTC), and 1461 to 1487 (GGSA…TDEV). 2 stretches are compositionally biased toward polar residues: residues 699–716 (SSRS…SSPR) and 727–737 (PPRSSAGSTTV). A compositionally biased stretch (low complexity) spans 847–860 (DSSSVSSGLSDTLD). Residues 874–886 (GISSRKSKAAQSN) show a composition bias toward polar residues. Positions 919–932 (PSCKWKTSSPSSSC) are enriched in low complexity. Polar residues predominate over residues 939-950 (QKTGLPMSQTGS). The span at 977–989 (GKTDDAKASEKGK) shows a compositional bias: basic and acidic residues. Low complexity predominate over residues 1110-1137 (SSSGGSSVVSRSGHRSSSSSIDSNVSGK). Positions 1163 to 1172 (GRSSPVTINQ) are enriched in polar residues. Low complexity-rich tracts occupy residues 1185–1202 (GTGL…TQSG) and 1223–1234 (GSKASSKPSSPG). Over residues 1266–1276 (GSLGSMGGQSG) the composition is skewed to gly residues. A compositionally biased stretch (low complexity) spans 1292 to 1305 (SPASSPASGLSLPS). 2 stretches are compositionally biased toward polar residues: residues 1313–1339 (NLSS…SSES) and 1354–1363 (RTGSVKSTLS). A compositionally biased stretch (basic and acidic residues) spans 1381-1391 (TSHEEGKEWLR). Residues 1392-1412 (SHSTGGLQDTGSPLSPPGTTC) show a composition bias toward polar residues. Residues 1499–1586 (SSLYSAQIRK…TDAQTAIQVA (88 aa)) adopt a coiled-coil conformation. Disordered regions lie at residues 1602–1672 (QHSS…PSSP), 1756–1792 (NDRL…SRQS), and 2207–2269 (GYSS…ESAL). 2 stretches are compositionally biased toward low complexity: residues 1605-1623 (SESM…LGSA) and 1765-1792 (TTPA…SRQS). A coiled-coil region spans residues 1697 to 1765 (CECTEAEAEI…NDRLKSSGNT (69 aa)). Residues 2208 to 2224 (YSSSKDGAASKQVSQSD) are compositionally biased toward polar residues.

Belongs to the Nav/unc-53 family. In terms of assembly, interacts with F-actin.

The protein resides in the nucleus outer membrane. The protein localises to the golgi apparatus. It is found in the cell projection. Its subcellular location is the lamellipodium. It localises to the filopodium. Functionally, involved in liver and heart organogenesis during embryo development. Plays a role in the migration of hepatoblasts from the intestinal endoderm during liver organogenesis; possibly by modulating actin polymerization during hepatoblast outgrowth. May be involved in neuron regeneration. This is Neuron navigator 3 (nav3) from Danio rerio (Zebrafish).